Here is a 259-residue protein sequence, read N- to C-terminus: Steroidogenic acute regulatory-like protein 1 (259 aa).

The N-terminal stretch at 1–20 is a signal peptide; that stretch reads MTLLPFTCLILLYSLGSVMS. Residues 43 to 254 form the START domain; it reads YATALKTCGE…NRRHFQNLKA (212 aa).

This chain is Steroidogenic acute regulatory-like protein 1 (strl-1), found in Caenorhabditis elegans.